Reading from the N-terminus, the 625-residue chain is Glyco-Gag protein (625 aa).

Over 1 to 66 the chain is Cytoplasmic; the sequence is LGDVSEASGA…SVFRRNRAAR (66 aa). The helical transmembrane segment at 67 to 86 threads the bilayer; the sequence is LVCLSIVLSFVCSLLFWTAS. Topologically, residues 87–625 are extracellular; that stretch reads KNMGQTVTTP…PQTSLLTLDD (539 aa). Asn113 carries N-linked (GlcNAc...) asparagine; by host glycosylation. The interval 195–305 is disordered; sequence PSPTAPILPS…STTSRAFPLR (111 aa). Residue Asn479 is glycosylated (N-linked (GlcNAc...) asparagine; by host). Basic and acidic residues-rich tracts occupy residues 522 to 553 and 573 to 606; these read ETPEEREERVRRETEEKEERRRAEEEQKEKER and RQDRQGGERRRPQLDKDQCAYCKEKGHWAKDCPK. The interval 522–625 is disordered; the sequence is ETPEEREERV…PQTSLLTLDD (104 aa).

Glycosylated by host. In terms of processing, cleaved by host near the middle of the molecule, releasing the c-terminal half containing capsid and nucleoprotein domains op GAG.

The protein resides in the host cell membrane. Functionally, plays a role in viral particle release. Presumably acts by facilitating the fission of the virion bud at the cell surface. May prevent the antiviral activity of murine APOBEC3. The polypeptide is Glyco-Gag protein (AKV murine leukemia virus (AKR (endogenous) murine leukemia virus)).